Reading from the N-terminus, the 31-residue chain is Cytochrome b6-f complex subunit 6 (31 aa).

Residues 3–23 traverse the membrane as a helical segment; the sequence is ALIGYILLMTLMFSLAAGLYF.

This sequence belongs to the PetL family. As to quaternary structure, the 4 large subunits of the cytochrome b6-f complex are cytochrome b6, subunit IV (17 kDa polypeptide, PetD), cytochrome f and the Rieske protein, while the 4 small subunits are PetG, PetL, PetM and PetN. The complex functions as a dimer.

It localises to the plastid. It is found in the chloroplast thylakoid membrane. Its function is as follows. Component of the cytochrome b6-f complex, which mediates electron transfer between photosystem II (PSII) and photosystem I (PSI), cyclic electron flow around PSI, and state transitions. PetL is important for photoautotrophic growth as well as for electron transfer efficiency and stability of the cytochrome b6-f complex. The protein is Cytochrome b6-f complex subunit 6 of Emiliania huxleyi (Coccolithophore).